A 131-amino-acid polypeptide reads, in one-letter code: Small ribosomal subunit protein uS8 (131 aa).

This sequence belongs to the universal ribosomal protein uS8 family. In terms of assembly, part of the 30S ribosomal subunit. Contacts proteins S5 and S12.

Its function is as follows. One of the primary rRNA binding proteins, it binds directly to 16S rRNA central domain where it helps coordinate assembly of the platform of the 30S subunit. The chain is Small ribosomal subunit protein uS8 from Chromobacterium violaceum (strain ATCC 12472 / DSM 30191 / JCM 1249 / CCUG 213 / NBRC 12614 / NCIMB 9131 / NCTC 9757 / MK).